The chain runs to 457 residues: Gustatory and odorant receptor 24 (457 aa).

The Cytoplasmic portion of the chain corresponds to Met1–Pro115. Residues Ser116–Leu136 form a helical membrane-spanning segment. The Extracellular segment spans residues Asn137–Ser152. A helical transmembrane segment spans residues Val153 to Tyr173. At Glu174 to Gln209 the chain is on the cytoplasmic side. Residues Val210–Met230 traverse the membrane as a helical segment. Topologically, residues Val231–Gln237 are extracellular. Residues Val238–Ala258 traverse the membrane as a helical segment. Over Cys259 to Tyr309 the chain is Cytoplasmic. A helical membrane pass occupies residues Thr310 to Met330. Residues Ser331–Asp341 are Extracellular-facing. A helical transmembrane segment spans residues Ile342–Ala362. The Cytoplasmic segment spans residues His363–Lys421. A helical transmembrane segment spans residues Ser422–Pro442. Residues Asp443–Ser457 are Extracellular-facing. N-linked (GlcNAc...) asparagine glycosylation occurs at Asn453.

It belongs to the insect chemoreceptor superfamily. Gustatory receptor (GR) family. Gr21a subfamily. Carbon dioxide-responsive neurons coexpress GPRgr22 and GPRgr24 in the maxillary palp, at both larval and adult life stages.

Its subcellular location is the cell membrane. Functionally, gustatory receptor which mediates acceptance or avoidance behavior, depending on its substrates. GPRgr22 and GPRgr24 together are sufficient for olfactory carbon dioxide-chemosensation. The sequence is that of Gustatory and odorant receptor 24 from Anopheles gambiae (African malaria mosquito).